A 263-amino-acid polypeptide reads, in one-letter code: Urease accessory protein UreH (263 aa).

Belongs to the UreD family. In terms of assembly, ureH, UreF and UreG form a complex that acts as a GTP-hydrolysis-dependent molecular chaperone, activating the urease apoprotein by helping to assemble the nickel containing metallocenter of UreC. The UreE protein probably delivers the nickel.

Its subcellular location is the cytoplasm. In terms of biological role, required for maturation of urease via the functional incorporation of the urease nickel metallocenter. The sequence is that of Urease accessory protein UreH from Helicobacter acinonychis (strain Sheeba).